Consider the following 527-residue polypeptide: MTNQAAEVAKRRTFAIISHPDAGKTTITEKLLLMGKAISVAGTVKSRKSDRHATSDWMEMEKQRGISITTSVMQFPYREHMINLLDTPGHEDFSEDTYRTLTAVDSALMVLDGGKGVEPRTIALMDVCRLRDTPIVSFINKLDRDIRDPIELLDEIEAVLKIKAAPITWPIGCYRDFKGVYHLTGDYIIVYTPGHGHERTEAKIIQKLDSDEARAHLGDQYDSFVDQLELVQGACHEFNQDEFINGQLTPVFFGTALGNFGVDHVLDAVVDWAPRPLGRVAHERTVEPVEEKFTGFVFKIQANMDPKHRDRIAFMRICSGKYEKGMKMRHVRLNKDLRIGDALTFFSSEREQLEEAFAGDIIGLHNHGTIQIGDTFTEGEALGFTGIPHFAPELFRRVRLKDPLKSKQLRQGLQQLAEEGATQVFFPERSNDIILGAVGVLQFDVVASRLKEEYKVECAYEPITVWSARWISCDDKKKLEEFQNKAMENLAIDGGGHLTYLAPTRVNLSLMEERWPDIKFRATREHH.

In terms of domain architecture, tr-type G spans 9–277; that stretch reads AKRRTFAIIS…AVVDWAPRPL (269 aa). GTP contacts are provided by residues 18-25, 86-90, and 140-143; these read SHPDAGKT, DTPGH, and NKLD.

Belongs to the TRAFAC class translation factor GTPase superfamily. Classic translation factor GTPase family. PrfC subfamily.

The protein localises to the cytoplasm. Increases the formation of ribosomal termination complexes and stimulates activities of RF-1 and RF-2. It binds guanine nucleotides and has strong preference for UGA stop codons. It may interact directly with the ribosome. The stimulation of RF-1 and RF-2 is significantly reduced by GTP and GDP, but not by GMP. The chain is Peptide chain release factor 3 from Pseudomonas entomophila (strain L48).